Here is a 98-residue protein sequence, read N- to C-terminus: NADH-ubiquinone oxidoreductase chain 4L (98 aa).

The next 3 helical transmembrane spans lie at 2–22 (TLTT…TLIF), 29–49 (TLLC…ITAL), and 61–81 (ITTL…LTMV).

Belongs to the complex I subunit 4L family. Core subunit of respiratory chain NADH dehydrogenase (Complex I) which is composed of 45 different subunits.

The protein resides in the mitochondrion inner membrane. It catalyses the reaction a ubiquinone + NADH + 5 H(+)(in) = a ubiquinol + NAD(+) + 4 H(+)(out). Core subunit of the mitochondrial membrane respiratory chain NADH dehydrogenase (Complex I) which catalyzes electron transfer from NADH through the respiratory chain, using ubiquinone as an electron acceptor. Part of the enzyme membrane arm which is embedded in the lipid bilayer and involved in proton translocation. The polypeptide is NADH-ubiquinone oxidoreductase chain 4L (MT-ND4L) (Oxymycterus rufus (Red hocicudo)).